The following is a 417-amino-acid chain: Serine hydroxymethyltransferase (417 aa).

(6S)-5,6,7,8-tetrahydrofolate is bound by residues Leu112 and 116-118 (GHL). Residue Lys221 is modified to N6-(pyridoxal phosphate)lysine. Glu247 contacts (6S)-5,6,7,8-tetrahydrofolate.

The protein belongs to the SHMT family. As to quaternary structure, homodimer. The cofactor is pyridoxal 5'-phosphate.

It localises to the cytoplasm. It carries out the reaction (6R)-5,10-methylene-5,6,7,8-tetrahydrofolate + glycine + H2O = (6S)-5,6,7,8-tetrahydrofolate + L-serine. It functions in the pathway one-carbon metabolism; tetrahydrofolate interconversion. The protein operates within amino-acid biosynthesis; glycine biosynthesis; glycine from L-serine: step 1/1. Catalyzes the reversible interconversion of serine and glycine with tetrahydrofolate (THF) serving as the one-carbon carrier. This reaction serves as the major source of one-carbon groups required for the biosynthesis of purines, thymidylate, methionine, and other important biomolecules. Also exhibits THF-independent aldolase activity toward beta-hydroxyamino acids, producing glycine and aldehydes, via a retro-aldol mechanism. This chain is Serine hydroxymethyltransferase, found in Borrelia duttonii (strain Ly).